A 224-amino-acid polypeptide reads, in one-letter code: Mammalian ependymin-related protein 1 (224 aa).

Residues 1–37 (MPGRAPLRTVPGALGAWLLGGLWAWTLCGLCSLGAVG) form the signal peptide. Disulfide bonds link Cys-42–Cys-172, Cys-88–Cys-222, and Cys-113–Cys-210. N-linked (GlcNAc...) asparagine glycosylation is found at Asn-130 and Asn-182.

This sequence belongs to the ependymin family. In terms of assembly, homodimer. N-glycosylated; the glycan contains mannose-6-phosphate moieties. As to expression, ubiquitous. Detected in brain, heart, skeletal muscle, kidney, testis, ovary and prostate.

It is found in the lysosome lumen. It localises to the secreted. Functionally, binds anionic lipids and gangliosides at acidic pH. In Homo sapiens (Human), this protein is Mammalian ependymin-related protein 1 (EPDR1).